The following is a 251-amino-acid chain: Triosephosphate isomerase (251 aa).

9-11 lines the substrate pocket; that stretch reads NWK. The active-site Electrophile is His94. The Proton acceptor role is filled by Glu166. Residues Gly172, Ser211, and 232–233 each bind substrate; that span reads GG.

The protein belongs to the triosephosphate isomerase family. In terms of assembly, homodimer.

Its subcellular location is the cytoplasm. It catalyses the reaction D-glyceraldehyde 3-phosphate = dihydroxyacetone phosphate. Its pathway is carbohydrate biosynthesis; gluconeogenesis. It functions in the pathway carbohydrate degradation; glycolysis; D-glyceraldehyde 3-phosphate from glycerone phosphate: step 1/1. Its function is as follows. Involved in the gluconeogenesis. Catalyzes stereospecifically the conversion of dihydroxyacetone phosphate (DHAP) to D-glyceraldehyde-3-phosphate (G3P). The chain is Triosephosphate isomerase from Xanthomonas oryzae pv. oryzae (strain MAFF 311018).